The chain runs to 112 residues: 2Fe-2S ferredoxin (112 aa).

Residues 5–107 (IKVTFIINDG…GIKVHLPAAT (103 aa)) form the 2Fe-2S ferredoxin-type domain. [2Fe-2S] cluster-binding residues include cysteine 42, cysteine 48, cysteine 51, and cysteine 88.

It belongs to the adrenodoxin/putidaredoxin family. [2Fe-2S] cluster is required as a cofactor.

Ferredoxin are iron-sulfur proteins that transfer electrons in a wide variety of metabolic reactions. The polypeptide is 2Fe-2S ferredoxin (fdxB) (Rickettsia rickettsii).